We begin with the raw amino-acid sequence, 129 residues long: Glycine cleavage system H protein (129 aa).

The Lipoyl-binding domain occupies 24-106 (IAVIGISAYA…YEQGWLLKVQ (83 aa)). The residue at position 65 (K65) is an N6-lipoyllysine.

Belongs to the GcvH family. The glycine cleavage system is composed of four proteins: P, T, L and H. The cofactor is (R)-lipoate.

Functionally, the glycine cleavage system catalyzes the degradation of glycine. The H protein shuttles the methylamine group of glycine from the P protein to the T protein. The polypeptide is Glycine cleavage system H protein (Synechococcus elongatus (strain ATCC 33912 / PCC 7942 / FACHB-805) (Anacystis nidulans R2)).